A 156-amino-acid polypeptide reads, in one-letter code: Protein CURVATURE THYLAKOID 1C, chloroplastic (156 aa).

Residues 1 to 55 constitute a chloroplast transit peptide; it reads MASISATLPSPLLLTQRKSNLTSIQKLPFSLTRGTNDLSPLSLTRNPSSISLMVK. Residues 56 to 83 are Stromal-facing; the sequence is ASGESSDSSTDLDVVSTIQNVWDKSEDR. The chain crosses the membrane as a helical span at residues 84–104; sequence LGLIGLGFAGIVALWASLNLI. Topologically, residues 105–109 are lumenal; it reads TAIDK. Residues 110–130 form a helical membrane-spanning segment; the sequence is LPVISSGFELVGILFSTWFTY. Residues 131-156 are Stromal-facing; sequence RYLLFKPDRQELSKIVKKSVADILGQ.

The protein belongs to the CURT family. Homo- and heterodimers and trimers. Interacts with PSAD2.

It is found in the plastid. The protein resides in the chloroplast thylakoid membrane. In terms of biological role, determines thylakoid architecture by inducing membrane curvature. This chain is Protein CURVATURE THYLAKOID 1C, chloroplastic (CURT1C), found in Arabidopsis thaliana (Mouse-ear cress).